A 244-amino-acid chain; its full sequence is Type III pantothenate kinase (244 aa).

9 to 16 (DAGNSSLK) serves as a coordination point for ATP. Substrate is bound by residues tyrosine 90 and 97-100 (GVDR). The active-site Proton acceptor is the aspartate 99. Residue threonine 122 coordinates ATP. Threonine 172 contributes to the substrate binding site.

It belongs to the type III pantothenate kinase family. In terms of assembly, homodimer. NH4(+) is required as a cofactor. K(+) serves as cofactor.

It localises to the cytoplasm. It carries out the reaction (R)-pantothenate + ATP = (R)-4'-phosphopantothenate + ADP + H(+). Its pathway is cofactor biosynthesis; coenzyme A biosynthesis; CoA from (R)-pantothenate: step 1/5. In terms of biological role, catalyzes the phosphorylation of pantothenate (Pan), the first step in CoA biosynthesis. This is Type III pantothenate kinase from Thiobacillus denitrificans (strain ATCC 25259 / T1).